A 548-amino-acid polypeptide reads, in one-letter code: MAAKDVKFGNDARVKMLKGVNVLADAVKVTLGPKGRNVILDKSFGAPTITKDGVSVAREIELEDKFENMGAQMVKEVASKANDAAGDGTTTATVLAQAIVNEGLKAVAAGMNPMDLKRGIDKAVSAVVSELKNLSKPCETSKEIEQVGTISANSDSIVGQLISQAMEKVGKEGVITVEDGTGLEDELDVVEGMQFDRGYLSPYFINKPETATVELDNPYLLLVDKKISNIRELLPVLEGVAKAGKPLLIIAEDVEGEALATLVVNTMRGIVKVAAVKAPGFGDRRKAMLQDIAILTAGTVISEEIGMELEKATLEDLGQAKRVVINKDNTTIIDGIGDEAQIKGRVAQIRQQIEESTSDYDKEKLQERVAKLAGGVAVIKVGAATEVEMKEKKDRVDDALHATRAAVEEGIVAGGGVALVRAAAKVAASLKGDNEEQNVGIKLALRAMEAPLRQIVTNAGEEASVVASAVKNGEGNFGYNAGTEQYGDMIEMGILDPTKVTRSALQFAASVAGLMITTECMVTDLPKDDKADLGAAGMGGMGGMGGMM.

ATP-binding positions include 30–33, Lys51, 87–91, Gly415, and Asp496; these read TLGP and DGTTT.

It belongs to the chaperonin (HSP60) family. In terms of assembly, forms a cylinder of 14 subunits composed of two heptameric rings stacked back-to-back. Interacts with the co-chaperonin GroES.

The protein localises to the cytoplasm. It carries out the reaction ATP + H2O + a folded polypeptide = ADP + phosphate + an unfolded polypeptide.. Functionally, together with its co-chaperonin GroES, plays an essential role in assisting protein folding. The GroEL-GroES system forms a nano-cage that allows encapsulation of the non-native substrate proteins and provides a physical environment optimized to promote and accelerate protein folding. The sequence is that of Chaperonin GroEL from Haemophilus influenzae (strain PittGG).